The chain runs to 190 residues: T-cell receptor gamma chain C region 5/10-13 (190 aa).

The tract at residues 1-157 (DKRTDSDFSP…LQVTTTYAFY (157 aa)) is c region. A helical membrane pass occupies residues 158 to 178 (TYLILFFKSMVHLAFVVFCLF). Residues 179–190 (RRAAMSCDDQRS) lie on the Cytoplasmic side of the membrane.

The protein resides in the membrane. The protein is T-cell receptor gamma chain C region 5/10-13 of Mus musculus (Mouse).